We begin with the raw amino-acid sequence, 387 residues long: Glutamate N-acetyltransferase (387 aa).

Positions 140, 162, 173, 257, 382, and 387 each coordinate substrate. The Nucleophile role is filled by Thr-173.

This sequence belongs to the ArgJ family. Heterotetramer of two alpha and two beta chains.

Its subcellular location is the cytoplasm. It catalyses the reaction N(2)-acetyl-L-ornithine + L-glutamate = N-acetyl-L-glutamate + L-ornithine. It participates in amino-acid biosynthesis; L-arginine biosynthesis; L-ornithine and N-acetyl-L-glutamate from L-glutamate and N(2)-acetyl-L-ornithine (cyclic): step 1/1. In terms of biological role, catalyzes the transfer of the acetyl group from N(2)-acetylornithine to glutamate, forming N-acetylglutamate and L-ornithine. In Methanopyrus kandleri (strain AV19 / DSM 6324 / JCM 9639 / NBRC 100938), this protein is Glutamate N-acetyltransferase.